Reading from the N-terminus, the 467-residue chain is Xanthan biosynthesis protein XanB (467 aa).

This sequence belongs to the mannose-6-phosphate isomerase type 2 family.

It catalyses the reaction D-mannose 6-phosphate = D-fructose 6-phosphate. The enzyme catalyses alpha-D-mannose 1-phosphate + GTP + H(+) = GDP-alpha-D-mannose + diphosphate. It participates in nucleotide-sugar biosynthesis; GDP-alpha-D-mannose biosynthesis; GDP-alpha-D-mannose from alpha-D-mannose 1-phosphate (GTP route): step 1/1. The protein operates within nucleotide-sugar biosynthesis; GDP-alpha-D-mannose biosynthesis; alpha-D-mannose 1-phosphate from D-fructose 6-phosphate: step 1/2. Its function is as follows. Involved in xanthan production. This is Xanthan biosynthesis protein XanB (xanB) from Xanthomonas campestris pv. campestris (strain ATCC 33913 / DSM 3586 / NCPPB 528 / LMG 568 / P 25).